A 366-amino-acid polypeptide reads, in one-letter code: 3-dehydroquinate synthase (366 aa).

Residues 74 to 79, 108 to 112, 132 to 133, Lys-144, Lys-153, and 171 to 174 each bind NAD(+); these read SGEAAK, GVVGD, TT, and FLRT. The Zn(2+) site is built by Glu-186, His-249, and His-266.

The protein belongs to the sugar phosphate cyclases superfamily. Dehydroquinate synthase family. Requires Co(2+) as cofactor. It depends on Zn(2+) as a cofactor. NAD(+) is required as a cofactor.

The protein resides in the cytoplasm. The enzyme catalyses 7-phospho-2-dehydro-3-deoxy-D-arabino-heptonate = 3-dehydroquinate + phosphate. The protein operates within metabolic intermediate biosynthesis; chorismate biosynthesis; chorismate from D-erythrose 4-phosphate and phosphoenolpyruvate: step 2/7. In terms of biological role, catalyzes the conversion of 3-deoxy-D-arabino-heptulosonate 7-phosphate (DAHP) to dehydroquinate (DHQ). This Geobacillus thermodenitrificans (strain NG80-2) protein is 3-dehydroquinate synthase.